Here is a 74-residue protein sequence, read N- to C-terminus: DNA-directed RNA polymerase subunit omega (74 aa).

This sequence belongs to the RNA polymerase subunit omega family. As to quaternary structure, the RNAP catalytic core consists of 2 alpha, 1 beta, 1 beta' and 1 omega subunit. When a sigma factor is associated with the core the holoenzyme is formed, which can initiate transcription.

The enzyme catalyses RNA(n) + a ribonucleoside 5'-triphosphate = RNA(n+1) + diphosphate. Promotes RNA polymerase assembly. Latches the N- and C-terminal regions of the beta' subunit thereby facilitating its interaction with the beta and alpha subunits. This chain is DNA-directed RNA polymerase subunit omega, found in Helicobacter pylori (strain Shi470).